The sequence spans 197 residues: Peptidyl-tRNA hydrolase (197 aa).

Tyrosine 21 is a binding site for tRNA. The active-site Proton acceptor is histidine 26. Tyrosine 72, asparagine 74, and asparagine 120 together coordinate tRNA.

Belongs to the PTH family. As to quaternary structure, monomer.

The protein resides in the cytoplasm. It catalyses the reaction an N-acyl-L-alpha-aminoacyl-tRNA + H2O = an N-acyl-L-amino acid + a tRNA + H(+). Its function is as follows. Hydrolyzes ribosome-free peptidyl-tRNAs (with 1 or more amino acids incorporated), which drop off the ribosome during protein synthesis, or as a result of ribosome stalling. Catalyzes the release of premature peptidyl moieties from peptidyl-tRNA molecules trapped in stalled 50S ribosomal subunits, and thus maintains levels of free tRNAs and 50S ribosomes. This is Peptidyl-tRNA hydrolase from Alkalilimnicola ehrlichii (strain ATCC BAA-1101 / DSM 17681 / MLHE-1).